A 218-amino-acid polypeptide reads, in one-letter code: MYLFHLCLVFACVPCPTFQASKLCLGWLWGMDIDPYKEFGSSYQLLNFLPLDFFPDLNALVDTATALYEEELTGREHCSPHHTAIRQALVCWDELTKLIAWMSSNITSEQVRTIIVNHVNDTWGLKVRQSLWFHLSCLTFGQHTVQEFLVSFGVWIRTPAPYRPPNAPILSTLPEHTVIRRRGGARASRSPRRRTPSPRRRRSQSPRRRRSQSPSANC.

Positions M1–Q19 are cleaved as a signal peptide. An HBEAG region spans residues G26–L28. The segment covering R180–S211 has biased composition (basic residues). Positions R180 to C218 are disordered. The 1; half-length repeat unit spans residues S190 to P196. Residues S190–Q212 form a 3 X 8 AA repeats of S-P-R-R-R-R-S-Q region. The propeptide occupies S190–C218. A run of 2 repeats spans residues S197–Q204 and S205–Q212.

It belongs to the orthohepadnavirus precore antigen family. In terms of assembly, homodimerizes. Post-translationally, phosphorylated. In terms of processing, cleaved by host furin.

The protein resides in the secreted. The protein localises to the host nucleus. Functionally, may regulate immune response to the intracellular capsid in acting as a T-cell tolerogen, by having an immunoregulatory effect which prevents destruction of infected cells by cytotoxic T-cells. This immune regulation may predispose to chronicity during perinatal infections and prevent severe liver injury during adult infections. The sequence is that of External core antigen from Marmota monax (Woodchuck).